The sequence spans 315 residues: Protein LST8 homolog (315 aa).

8 WD repeats span residues 1 to 31 (MGDQ…KTMR), 33 to 71 (VETS…TAPV), 76 to 115 (GVQK…PHCS), 119 to 158 (DCES…HECI), 161 to 200 (EVDA…DQKM), 211 to 250 (AHTR…KWRE), 253 to 292 (IENY…PTRE), and 295 to 315 (GHTK…KVNH).

Belongs to the WD repeat LST8 family.

It is found in the cytoplasm. This chain is Protein LST8 homolog, found in Drosophila pseudoobscura pseudoobscura (Fruit fly).